A 385-amino-acid chain; its full sequence is Rubredoxin-NAD(+) reductase (385 aa).

Residues 8-11 (AGTA), 32-33 (SR), isoleucine 79, glutamate 156, aspartate 275, and isoleucine 293 contribute to the FAD site.

The protein belongs to the FAD-dependent oxidoreductase family. In terms of assembly, homodimer. FAD is required as a cofactor.

The protein resides in the cytoplasm. The catalysed reaction is 2 reduced [rubredoxin] + NAD(+) + H(+) = 2 oxidized [rubredoxin] + NADH. Its pathway is hydrocarbon metabolism; alkane degradation. Functionally, involved in the hydrocarbon hydroxylating system, which transfers electrons from NADH to rubredoxin reductase and then through rubredoxin to alkane 1 monooxygenase. In Ectopseudomonas oleovorans (Pseudomonas oleovorans), this protein is Rubredoxin-NAD(+) reductase (alkT).